The following is a 158-amino-acid chain: uncharacterized protein (158 aa).

An FPG-type zinc finger spans residues 109–143 (RVHARTGLPCPVCGDTVREVSFADKSFQYCPTCQT).

This is an uncharacterized protein from Mycobacterium tuberculosis (strain ATCC 25618 / H37Rv).